A 512-amino-acid chain; its full sequence is MTLPEPLFRMEGISKRYGGAVALKDADIAIRPGAIHAVLGENGAGKSTLIKIMAGVVAPDEGRMLLDGKEIAFASPAAANAAGIVCVFQELSLIPDLSVADNIVISNPPLKFGMIDRRRQRRIAEEALARAGASDIHPSALVKDLPLSRRQMVEIAKALARKPRLMILDEATSALTQSDVEKVFTMLKRLRAEGMALIYISHRMHEIAQLADECTVFRNGRSIESYPAGTKTDQQVVELMIGREYSNVFPPKPAHRGEVMPVLSCRDLSWGDRLSGITFDIRPGEIIGVGGLDGQGQRELLLALFGVLRDVKGEVVIDGRPVTLKSPRDAKSGGISMALIPEDRKTEGLMLPMTVRENLSIAALDRVSRNGVIDRAAERREIDDLFKLLAIKAATIDMPVAALSGGNQQKVVIAKWLMNRPRIILLNDPTRGIDVGTKQEIYLLLRKLADAGAAIIFYSTDYDELIGCCDRVLVMYDGSIIRQLEGAEINEHELIGAALNIAGDHAAQRIAP.

2 consecutive ABC transporter domains span residues phenylalanine 8 to glutamate 244 and alanine 254 to alanine 502. Glycine 40–serine 47 lines the ATP pocket.

The protein belongs to the ABC transporter superfamily. Ribose importer (TC 3.A.1.2.1) family. In terms of assembly, the complex is composed of an ATP-binding protein (RbsA), two transmembrane proteins (RbsC) and a solute-binding protein (RbsB).

It is found in the cell inner membrane. The enzyme catalyses D-ribose(out) + ATP + H2O = D-ribose(in) + ADP + phosphate + H(+). Part of the ABC transporter complex RbsABC involved in ribose import. Responsible for energy coupling to the transport system. The protein is Ribose import ATP-binding protein RbsA 1 of Rhizobium johnstonii (strain DSM 114642 / LMG 32736 / 3841) (Rhizobium leguminosarum bv. viciae).